Here is a 550-residue protein sequence, read N- to C-terminus: Medium/long-chain-fatty-acid--CoA/3-oxocholest-4-en-26-oate--CoA ligase (550 aa).

Residues 178 to 186 (TGGTTGFPK), D419, R434, and K525 contribute to the ATP site. A disordered region spans residues 525 to 550 (KPDYRWAKEQTEARPADDVHAAHVSA).

The protein belongs to the ATP-dependent AMP-binding enzyme family.

It carries out the reaction a medium-chain fatty acid + ATP + CoA = a medium-chain fatty acyl-CoA + AMP + diphosphate. The catalysed reaction is a long-chain fatty acid + ATP + CoA = a long-chain fatty acyl-CoA + AMP + diphosphate. The enzyme catalyses (25S)-3-oxocholest-4-en-26-oate + ATP + CoA = (25S)-3-oxocholest-4-en-26-oyl-CoA + AMP + diphosphate. The protein operates within lipid metabolism; fatty acid biosynthesis. Its pathway is steroid metabolism; cholesterol metabolism. In terms of biological role, catalyzes the activation of medium/long-chain fatty acids as acyl-coenzyme A (acyl-CoA), which are then transferred to the multifunctional polyketide synthase (PKS) type III for further chain extension. Also involved in the degradation of cholesterol via the degradation of the side chains of C-24 branched-chain sterols. Catalyzes the ATP-dependent CoA thioesterification of the sterol 3-oxocholest-4-en-26-oate to yield 3-oxocholest-4-en-26-oyl-CoA. This is Medium/long-chain-fatty-acid--CoA/3-oxocholest-4-en-26-oate--CoA ligase from Mycobacterium marinum (strain ATCC BAA-535 / M).